We begin with the raw amino-acid sequence, 368 residues long: MREAGEEKVAWKYFTRDVVPFAAMFAVECATVGSNTLFKAATLRGLSFYVFVFYSYIVSTLLLLPLSVIFGRSRRLPAAKSPLFFKIFLLGLVGFMSQIAGCKGIAYSSPTLASAISNLTPAFTFTLAVIFRMEQVRLRSSATQAKIIGAILSISGALVVVLYKGPQVLASASFTTVLPTVTLHQQLTSIESSWIIGGLLLASQYFLISVWYILQTRVMEVYPEEITVVFFYNLFATLISVPVCLFAESNLTSWVLKPDISLAAIIYSGVFVSLFSALTHTWGLHLKGPVYISLFRPLSIAIAVAMGAIFLGDALHLGSVIGSMILCIGFYTVIWGKAREDTIKTVAGSEQSPLLLTHIIEDGAFPLS.

The next 10 helical transmembrane spans lie at 18–38, 50–70, 82–102, 111–131, 142–162, 194–214, 226–246, 260–280, 292–312, and 315–335; these read VVPF…NTLF, VFVF…SVIF, PLFF…IAGC, TLAS…AVIF, ATQA…VVVL, WIIG…WYIL, ITVV…VCLF, ISLA…ALTH, ISLF…IFLG, and LHLG…TVIW. EamA domains lie at 33-161 and 208-334; these read GSNT…LVVV and ISVW…YTVI.

This sequence belongs to the drug/metabolite transporter (DMT) superfamily. Plant drug/metabolite exporter (P-DME) (TC 2.A.7.4) family.

Its subcellular location is the membrane. This chain is WAT1-related protein At5g40240, found in Arabidopsis thaliana (Mouse-ear cress).